The primary structure comprises 311 residues: Olfactory receptor 10G8 (311 aa).

Residues 1–23 (MSNASLLTAFILMGLPHAPALDA) lie on the Extracellular side of the membrane. N-linked (GlcNAc...) asparagine glycosylation occurs at Asn-3. A helical membrane pass occupies residues 24-44 (PLFGVFLVVYVLTVLGNLLIL). Residues 45-52 (LVIRVDSH) are Cytoplasmic-facing. Residues 53-73 (LHTTMYYFLTNLSFIDMWFST) traverse the membrane as a helical segment. Over 74 to 98 (VTVPKLLMTLVFPSGRAISFHSCMA) the chain is Extracellular. A disulfide bond links Cys-96 and Cys-188. The chain crosses the membrane as a helical span at residues 99 to 119 (QLYFFHFLGGTECFLYRVMSC). Residues 120–138 (DRYLAISYPLRYTSMMTGR) lie on the Cytoplasmic side of the membrane. A helical transmembrane segment spans residues 139–159 (SCTLLATSTWLSGSLHSAVQA). The Extracellular portion of the chain corresponds to 160–196 (ILTFHLPYCGPNWIQHYLCDAPPILKLACADTSAIET). Residues 197 to 216 (VIFVTVGIVASGCFVLIVLS) traverse the membrane as a helical segment. The Cytoplasmic segment spans residues 217–236 (YVSIVCSILRIRTSEGKHRA). A helical transmembrane segment spans residues 237–257 (FQTCASHCIVVLCFFGPGLFI). Residues 258 to 268 (YLRPGSRKAVD) are Extracellular-facing. The helical transmembrane segment at 269–289 (GVVAVFYTVLTPLLNPVVYTL) threads the bilayer. At 290–311 (RNKEVKKALLKLKDKVAHSQSK) the chain is on the cytoplasmic side.

It belongs to the G-protein coupled receptor 1 family.

It localises to the cell membrane. Its function is as follows. Odorant receptor. The sequence is that of Olfactory receptor 10G8 (OR10G8) from Homo sapiens (Human).